Reading from the N-terminus, the 284-residue chain is Phosphatidylserine decarboxylase proenzyme (284 aa).

Active-site charge relay system; for autoendoproteolytic cleavage activity residues include Asp-88, His-145, and Ser-248. Ser-248 acts as the Schiff-base intermediate with substrate; via pyruvic acid; for decarboxylase activity in catalysis. The residue at position 248 (Ser-248) is a Pyruvic acid (Ser); by autocatalysis.

The protein belongs to the phosphatidylserine decarboxylase family. PSD-B subfamily. Prokaryotic type I sub-subfamily. As to quaternary structure, heterodimer of a large membrane-associated beta subunit and a small pyruvoyl-containing alpha subunit. It depends on pyruvate as a cofactor. Is synthesized initially as an inactive proenzyme. Formation of the active enzyme involves a self-maturation process in which the active site pyruvoyl group is generated from an internal serine residue via an autocatalytic post-translational modification. Two non-identical subunits are generated from the proenzyme in this reaction, and the pyruvate is formed at the N-terminus of the alpha chain, which is derived from the carboxyl end of the proenzyme. The autoendoproteolytic cleavage occurs by a canonical serine protease mechanism, in which the side chain hydroxyl group of the serine supplies its oxygen atom to form the C-terminus of the beta chain, while the remainder of the serine residue undergoes an oxidative deamination to produce ammonia and the pyruvoyl prosthetic group on the alpha chain. During this reaction, the Ser that is part of the protease active site of the proenzyme becomes the pyruvoyl prosthetic group, which constitutes an essential element of the active site of the mature decarboxylase.

The protein resides in the cell membrane. It catalyses the reaction a 1,2-diacyl-sn-glycero-3-phospho-L-serine + H(+) = a 1,2-diacyl-sn-glycero-3-phosphoethanolamine + CO2. Its pathway is phospholipid metabolism; phosphatidylethanolamine biosynthesis; phosphatidylethanolamine from CDP-diacylglycerol: step 2/2. In terms of biological role, catalyzes the formation of phosphatidylethanolamine (PtdEtn) from phosphatidylserine (PtdSer). This chain is Phosphatidylserine decarboxylase proenzyme, found in Delftia acidovorans (strain DSM 14801 / SPH-1).